The sequence spans 139 residues: Flagellar assembly factor FliW 2 (139 aa).

It belongs to the FliW family. Interacts with translational regulator CsrA and flagellin(s).

The protein resides in the cytoplasm. Acts as an anti-CsrA protein, binds CsrA and prevents it from repressing translation of its target genes, one of which is flagellin. Binds to flagellin and participates in the assembly of the flagellum. This chain is Flagellar assembly factor FliW 2, found in Helicobacter hepaticus (strain ATCC 51449 / 3B1).